A 233-amino-acid polypeptide reads, in one-letter code: Phosphoenolpyruvate guanylyltransferase 1 (233 aa).

Phosphoenolpyruvate contacts are provided by Thr154, Gly171, and Ser174.

This sequence belongs to the CofC family.

The enzyme catalyses phosphoenolpyruvate + GTP + H(+) = enolpyruvoyl-2-diphospho-5'-guanosine + diphosphate. The protein operates within cofactor biosynthesis; coenzyme F420 biosynthesis. Functionally, guanylyltransferase that catalyzes the activation of phosphoenolpyruvate (PEP) as enolpyruvoyl-2-diphospho-5'-guanosine, via the condensation of PEP with GTP. It is involved in the biosynthesis of coenzyme F420, a hydride carrier cofactor. This chain is Phosphoenolpyruvate guanylyltransferase 1, found in Rhodococcus jostii (strain RHA1).